Reading from the N-terminus, the 178-residue chain is Signaling threshold-regulating transmembrane adapter 1 (178 aa).

At 1–23 (MSRENNCTTADLAWGIPSITQAW) the chain is on the extracellular side. A glycan (N-linked (GlcNAc...) asparagine) is linked at asparagine 6. The helical; Signal-anchor for type III membrane protein transmembrane segment at 24-44 (GLWALFGVVTMLLLISLAALL) threads the bilayer. The Cytoplasmic portion of the chain corresponds to 45 to 178 (SQWTRGRRRT…AYANSQPAPS (134 aa)). Serine 62 and serine 65 each carry phosphoserine. Phosphotyrosine is present on tyrosine 72. The interval 72–75 (YGNL) is interaction with GRB2. Residues 81 to 102 (GRLSEESRSEEQDPSSGGLARG) form a disordered region. Residues serine 84, serine 87, and serine 89 each carry the phosphoserine modification. Residue tyrosine 109 is modified to Phosphotyrosine. Threonine 126 is subject to Phosphothreonine. The interval 128–133 (IKYCEV) is interaction with PTPN11. Tyrosine 130 and tyrosine 151 each carry phosphotyrosine. An interaction with CSK region spans residues 151–154 (YASV). Serine 164 is subject to Phosphoserine. Tyrosine 170 is subject to Phosphotyrosine. Residues 170-173 (YANS) form an interaction with GRB2 region.

In terms of assembly, homodimer; disulfide-linked. When phosphorylated, interacts with PTPN11/SHP2, GRB2 and CSK. In terms of processing, phosphorylated on tyrosines upon TCR activation; which promotes recruitment of PTPN11, GRB2 and CSK. In terms of tissue distribution, lymph node, spleen and thymus.

It localises to the cell membrane. In terms of biological role, negatively regulates T-cell antigen receptor (TCR)-mediated signaling. Involved in positive selection of T-cells. This chain is Signaling threshold-regulating transmembrane adapter 1 (Sit1), found in Rattus norvegicus (Rat).